Here is a 191-residue protein sequence, read N- to C-terminus: Probable protein-S-isoprenylcysteine O-methyltransferase (191 aa).

A run of 3 helical transmembrane segments spans residues 8-28, 45-65, and 66-86; these read WLFA…AAAF, YVLA…LFPE, and LKEY…GEVI. S-adenosyl-L-methionine is bound by residues 110-113, Y118, and 123-126; these read HKLI and HPGY. The helical transmembrane segment at 129–149 threads the bilayer; that stretch reads FLIWAVGTQVMLCNPLSTVAF. Substrate is bound at residue R160. E164 is an S-adenosyl-L-methionine binding site.

Belongs to the class VI-like SAM-binding methyltransferase superfamily. Isoprenylcysteine carboxyl methyltransferase family. It depends on Zn(2+) as a cofactor.

It is found in the endoplasmic reticulum membrane. The enzyme catalyses [protein]-C-terminal S-[(2E,6E)-farnesyl]-L-cysteine + S-adenosyl-L-methionine = [protein]-C-terminal S-[(2E,6E)-farnesyl]-L-cysteine methyl ester + S-adenosyl-L-homocysteine. Catalyzes the post-translational methylation of isoprenylated C-terminal cysteine residues. Carboxyl methylation is a reversible and potentially regulated step in the post-translational modification of prenylated proteins. This chain is Probable protein-S-isoprenylcysteine O-methyltransferase (ICMT), found in Oryza sativa subsp. indica (Rice).